Reading from the N-terminus, the 307-residue chain is Transcription initiation factor IIB (307 aa).

Repeat copies occupy residues 123-206 (NELE…LREL) and 217-298 (DYVT…ELTQ).

This sequence belongs to the TFIIB family.

Functionally, stabilizes TBP binding to an archaeal box-A promoter. Also responsible for recruiting RNA polymerase II to the pre-initiation complex (DNA-TBP-TFIIB). The polypeptide is Transcription initiation factor IIB (Sulfolobus acidocaldarius (strain ATCC 33909 / DSM 639 / JCM 8929 / NBRC 15157 / NCIMB 11770)).